The following is a 378-amino-acid chain: Circumsporozoite protein (378 aa).

Positions 1-22 (MKNFILLAVSSILLVDLFPTHC) are cleaved as a signal peptide. The interval 51–295 (HVGQSASRGR…NNEGANAPNE (245 aa)) is disordered. Positions 72–100 (DAKKKKDGKKAEPKNPRENKLKQPGDRAD) are enriched in basic and acidic residues. A required for the binding to heparan sulfate proteoglycans (HSPGs) on the surface of host hepatocytes region spans residues 80–88 (KKAEPKNPR). Positions 91-95 (KLKQP) are region I; contains the proteolytic cleavage site. Tandem repeats lie at residues 95-103 (PGDRADGQP), 104-112 (AGDRADGQP), 113-121 (AGDRADGQP), 122-130 (AGDRAAGQP), 131-139 (AGDRADGQP), 140-148 (AGDRADGQP), 149-157 (AGDRADGQP), 158-166 (AGDRADGQP), 167-175 (AGDRAAGQP), 176-184 (AGDRAAGQP), 185-193 (AGDRADGQP), 194-202 (AGDRAAGQP), 203-211 (AGDRADGQP), 212-220 (AGDRAAGQP), 221-229 (AGDRADGQP), 230-238 (AGDRAAGQP), 239-247 (AGDRAAGQP), 248-256 (AGDRAAGQP), and 257-265 (AGDRAAGQP). The segment at 95–265 (PGDRADGQPA…PAGDRAAGQP (171 aa)) is 19 X 9 AA tandem repeats of [PA]-G-D-R-A-[DA]-G-Q-P. The segment covering 266–284 (AGNGAGGQAAGGNAGGGQG) has biased composition (gly residues). The segment covering 285–295 (QNNEGANAPNE) has biased composition (low complexity). One can recognise a TSP type-1 domain in the interval 304 to 356 (KVRATVGTEWTPCSVTCGVGVRVRRRVNAANKKPEDLTLNDLETDVCTMDKCA). 2 cysteine pairs are disulfide-bonded: Cys-316–Cys-350 and Cys-320–Cys-355. Thr-319 carries O-linked (Fuc) threonine glycosylation. Residue Cys-355 is the site of GPI-anchor amidated cysteine attachment. Positions 356 to 378 (AGIFNVVSNSLGLVILLVLALFN) are cleaved as a propeptide — removed in mature form.

It belongs to the plasmodium circumsporozoite protein family. Post-translationally, during host cell invasion, proteolytically cleaved at the cell membrane in the region I by a papain-like cysteine protease of parasite origin. Cleavage is triggered by the sporozoite contact with highly sulfated heparan sulfate proteoglycans (HSPGs) present on the host hepatocyte cell surface. Cleavage exposes the TSP type-1 (TSR) domain and is required for productive invasion of host hepatocytes but not for adhesion to the host cell membrane. Cleavage is dispensable for sporozoite development in the oocyst, motility and for traversal of host and vector cells. In terms of processing, O-glycosylated; maybe by POFUT2.

It localises to the cell membrane. The protein resides in the cytoplasm. Functionally, essential sporozoite protein. In the mosquito vector, required for sporozoite development in the oocyst, migration through the vector hemolymph and entry into the vector salivary glands. In the vertebrate host, required for sporozoite migration through the host dermis and infection of host hepatocytes. Binds to highly sulfated heparan sulfate proteoglycans (HSPGs) on the surface of host hepatocytes. In terms of biological role, in the vertebrate host, binds to highly sulfated heparan sulfate proteoglycans (HSPGs) on the surface of host hepatocytes and is required for sporozoite invasion of the host hepatocytes. The polypeptide is Circumsporozoite protein (Plasmodium vivax (strain Belem)).